Reading from the N-terminus, the 466-residue chain is Argininosuccinate lyase (466 aa).

It belongs to the lyase 1 family. Argininosuccinate lyase subfamily.

It localises to the cytoplasm. The catalysed reaction is 2-(N(omega)-L-arginino)succinate = fumarate + L-arginine. It participates in amino-acid biosynthesis; L-arginine biosynthesis; L-arginine from L-ornithine and carbamoyl phosphate: step 3/3. This Ehrlichia ruminantium (strain Gardel) protein is Argininosuccinate lyase.